Here is a 270-residue protein sequence, read N- to C-terminus: Glutamate racemase (270 aa).

Substrate is bound by residues 15 to 16 (DS) and 47 to 48 (YG). Cys78 (proton donor/acceptor) is an active-site residue. 79–80 (NT) provides a ligand contact to substrate. Cys189 (proton donor/acceptor) is an active-site residue. 190–191 (TH) provides a ligand contact to substrate.

Belongs to the aspartate/glutamate racemases family.

The enzyme catalyses L-glutamate = D-glutamate. Its pathway is cell wall biogenesis; peptidoglycan biosynthesis. Its function is as follows. Provides the (R)-glutamate required for cell wall biosynthesis. The protein is Glutamate racemase of Syntrophus aciditrophicus (strain SB).